The chain runs to 338 residues: Lipoate-protein ligase A (338 aa).

The BPL/LPL catalytic domain occupies Pro-29 to Ile-216. ATP is bound by residues Arg-71, Gly-76–Phe-79, and Lys-134. Lys-134 is a (R)-lipoate binding site.

This sequence belongs to the LplA family. In terms of assembly, monomer.

It localises to the cytoplasm. The enzyme catalyses L-lysyl-[lipoyl-carrier protein] + (R)-lipoate + ATP = N(6)-[(R)-lipoyl]-L-lysyl-[lipoyl-carrier protein] + AMP + diphosphate + H(+). It participates in protein modification; protein lipoylation via exogenous pathway; protein N(6)-(lipoyl)lysine from lipoate: step 1/2. It functions in the pathway protein modification; protein lipoylation via exogenous pathway; protein N(6)-(lipoyl)lysine from lipoate: step 2/2. Functionally, catalyzes both the ATP-dependent activation of exogenously supplied lipoate to lipoyl-AMP and the transfer of the activated lipoyl onto the lipoyl domains of lipoate-dependent enzymes. This Salmonella typhi protein is Lipoate-protein ligase A.